A 274-amino-acid polypeptide reads, in one-letter code: Diaminopimelate epimerase (274 aa).

Substrate-binding residues include Asn-11 and Asn-60. Cys-69 serves as the catalytic Proton donor. Residues 70–71 (GN), Asn-191, and 209–210 (ER) each bind substrate. Residue Cys-218 is the Proton acceptor of the active site. 219 to 220 (GS) is a substrate binding site.

The protein belongs to the diaminopimelate epimerase family. Homodimer.

It is found in the cytoplasm. It carries out the reaction (2S,6S)-2,6-diaminopimelate = meso-2,6-diaminopimelate. Its pathway is amino-acid biosynthesis; L-lysine biosynthesis via DAP pathway; DL-2,6-diaminopimelate from LL-2,6-diaminopimelate: step 1/1. In terms of biological role, catalyzes the stereoinversion of LL-2,6-diaminopimelate (L,L-DAP) to meso-diaminopimelate (meso-DAP), a precursor of L-lysine and an essential component of the bacterial peptidoglycan. This Caldanaerobacter subterraneus subsp. tengcongensis (strain DSM 15242 / JCM 11007 / NBRC 100824 / MB4) (Thermoanaerobacter tengcongensis) protein is Diaminopimelate epimerase.